Consider the following 239-residue polypeptide: Trimethylguanosine synthase (239 aa).

Belongs to the methyltransferase superfamily. Trimethylguanosine synthase family. In terms of assembly, monomer. Interacts with mug174; both proteins are required to maintain Cajal body integrity.

Its subcellular location is the nucleus. It localises to the cajal body. It catalyses the reaction a 5'-end (N(7)-methyl 5'-triphosphoguanosine)-ribonucleoside in snRNA + S-adenosyl-L-methionine = a 5'-end (N(2),N(7)-dimethyl 5'-triphosphoguanosine)-ribonucleoside in snRNA + S-adenosyl-L-homocysteine + H(+). The enzyme catalyses a 5'-end (N(7)-methyl 5'-triphosphoguanosine)-ribonucleoside in snoRNA + S-adenosyl-L-methionine = a 5'-end (N(2),N(7)-dimethyl 5'-triphosphoguanosine)-ribonucleoside in snoRNA + S-adenosyl-L-homocysteine + H(+). It carries out the reaction a 5'-end (N(2),N(7)-dimethyl 5'-triphosphoguanosine)-ribonucleoside in snRNA + S-adenosyl-L-methionine = a 5'-end (N(2),N(2),N(7)-trimethyl 5'-triphosphoguanosine)-ribonucleoside in snRNA + S-adenosyl-L-homocysteine + H(+). The catalysed reaction is a 5'-end (N(2),N(7)-dimethyl 5'-triphosphoguanosine)-ribonucleoside in snoRNA + S-adenosyl-L-methionine = a 5'-end (N(2),N(2),N(7)-trimethyl 5'-triphosphoguanosine)-ribonucleoside in snoRNA + S-adenosyl-L-homocysteine + H(+). With respect to regulation, substrate inhibited by S-adenosyl-L-homocysteine. Catalyzes the two serial methylation steps for the conversion of the 7-monomethylguanosine (m(7)G) caps of snRNAs and snoRNAs to a 2,2,7-trimethylguanosine (m(2,2,7)G) cap structure. The enzyme is specific for guanine, and N7 methylation must precede N2 methylation. Required for pre-mRNA splicing, pre-rRNA processing and small ribosomal subunit synthesis. Involved in nucleolar structural organization. In Schizosaccharomyces pombe (strain 972 / ATCC 24843) (Fission yeast), this protein is Trimethylguanosine synthase (tgs1).